Reading from the N-terminus, the 520-residue chain is GMP synthase [glutamine-hydrolyzing] (520 aa).

The Glutamine amidotransferase type-1 domain maps to 9–202 (SVLIVDFGSQ…IHNVAGIKGD (194 aa)). The Nucleophile role is filled by Cys86. Active-site residues include His176 and Glu178. The 193-residue stretch at 203-395 (WSMSAYRQKA…LGLPDSFIGR (193 aa)) folds into the GMPS ATP-PPase domain. Position 230-236 (230-236 (SGGVDSS)) interacts with ATP.

As to quaternary structure, homodimer.

It carries out the reaction XMP + L-glutamine + ATP + H2O = GMP + L-glutamate + AMP + diphosphate + 2 H(+). It participates in purine metabolism; GMP biosynthesis; GMP from XMP (L-Gln route): step 1/1. In terms of biological role, catalyzes the synthesis of GMP from XMP. This chain is GMP synthase [glutamine-hydrolyzing], found in Rhizobium etli (strain ATCC 51251 / DSM 11541 / JCM 21823 / NBRC 15573 / CFN 42).